The primary structure comprises 380 residues: Cytochrome b (380 aa).

A run of 4 helical transmembrane segments spans residues 34–54 (FGSLLGICLMTQILTGLLLAM), 78–99 (WLIRNLHANGASFFFICIYLHI), 114–134 (WNTGVILLLTLMATAFVGYVL), and 179–199 (FFALHFLLPFMIAGLTLVHLT). Heme b contacts are provided by H84 and H98. The heme b site is built by H183 and H197. H202 lines the a ubiquinone pocket. Transmembrane regions (helical) follow at residues 227 to 247 (LKDILGFTLMFLLLTTLALFS), 289 to 309 (LGGVLALAASVLILFLAPFLH), 321 to 341 (LSQLLFWVLVANLFILTWVGS), and 348 to 368 (FIIIGQLASFTYFTILLILFP).

Belongs to the cytochrome b family. As to quaternary structure, the cytochrome bc1 complex contains 11 subunits: 3 respiratory subunits (MT-CYB, CYC1 and UQCRFS1), 2 core proteins (UQCRC1 and UQCRC2) and 6 low-molecular weight proteins (UQCRH/QCR6, UQCRB/QCR7, UQCRQ/QCR8, UQCR10/QCR9, UQCR11/QCR10 and a cleavage product of UQCRFS1). This cytochrome bc1 complex then forms a dimer. Heme b is required as a cofactor.

Its subcellular location is the mitochondrion inner membrane. In terms of biological role, component of the ubiquinol-cytochrome c reductase complex (complex III or cytochrome b-c1 complex) that is part of the mitochondrial respiratory chain. The b-c1 complex mediates electron transfer from ubiquinol to cytochrome c. Contributes to the generation of a proton gradient across the mitochondrial membrane that is then used for ATP synthesis. The protein is Cytochrome b (MT-CYB) of Procellaria westlandica (Westland petrel).